Consider the following 258-residue polypeptide: Peptidase inhibitor 15 (258 aa).

A signal peptide spans 1–21 (MIMNSAVSLVILLSLLCEAHT). Positions 22 to 60 (VVLLNPTDSSLPANNFTDTEAALSTPLESADIPKARRKR) are excised as a propeptide. Asn36 and Asn124 each carry an N-linked (GlcNAc...) asparagine glycan. Residues 71-211 (LDYHNQVRGK…RRAVYLVCNY (141 aa)) form the SCP domain.

It belongs to the CRISP family. In terms of processing, N-glycosylated. As to expression, weakly expressed. Expressed at low level in prostate, mammary gland, salivary gland and thyroid gland.

It is found in the secreted. In terms of biological role, serine protease inhibitor which displays weak inhibitory activity against trypsin. May play a role in facial patterning during embryonic development. The protein is Peptidase inhibitor 15 (Pi15) of Mus musculus (Mouse).